A 156-amino-acid polypeptide reads, in one-letter code: ATP synthase subunit b (156 aa).

A helical transmembrane segment spans residues 11 to 31 (LIAFALFVWFCMKFVWPPIIN).

Belongs to the ATPase B chain family. F-type ATPases have 2 components, F(1) - the catalytic core - and F(0) - the membrane proton channel. F(1) has five subunits: alpha(3), beta(3), gamma(1), delta(1), epsilon(1). F(0) has three main subunits: a(1), b(2) and c(10-14). The alpha and beta chains form an alternating ring which encloses part of the gamma chain. F(1) is attached to F(0) by a central stalk formed by the gamma and epsilon chains, while a peripheral stalk is formed by the delta and b chains.

The protein resides in the cell inner membrane. Functionally, f(1)F(0) ATP synthase produces ATP from ADP in the presence of a proton or sodium gradient. F-type ATPases consist of two structural domains, F(1) containing the extramembraneous catalytic core and F(0) containing the membrane proton channel, linked together by a central stalk and a peripheral stalk. During catalysis, ATP synthesis in the catalytic domain of F(1) is coupled via a rotary mechanism of the central stalk subunits to proton translocation. Its function is as follows. Component of the F(0) channel, it forms part of the peripheral stalk, linking F(1) to F(0). The protein is ATP synthase subunit b of Haemophilus influenzae (strain PittEE).